The primary structure comprises 211 residues: Methylthioribulose-1-phosphate dehydratase (211 aa).

His-105 and His-107 together coordinate Zn(2+).

It belongs to the aldolase class II family. MtnB subfamily. Requires Zn(2+) as cofactor.

The catalysed reaction is 5-(methylsulfanyl)-D-ribulose 1-phosphate = 5-methylsulfanyl-2,3-dioxopentyl phosphate + H2O. It functions in the pathway amino-acid biosynthesis; L-methionine biosynthesis via salvage pathway; L-methionine from S-methyl-5-thio-alpha-D-ribose 1-phosphate: step 2/6. Catalyzes the dehydration of methylthioribulose-1-phosphate (MTRu-1-P) into 2,3-diketo-5-methylthiopentyl-1-phosphate (DK-MTP-1-P). In Acidiphilium cryptum (strain JF-5), this protein is Methylthioribulose-1-phosphate dehydratase.